We begin with the raw amino-acid sequence, 308 residues long: Ribosomal RNA small subunit methyltransferase H (308 aa).

S-adenosyl-L-methionine contacts are provided by residues 34–36 (GGH), Asp-54, Phe-80, Asp-101, and Gln-108.

It belongs to the methyltransferase superfamily. RsmH family.

It is found in the cytoplasm. It catalyses the reaction cytidine(1402) in 16S rRNA + S-adenosyl-L-methionine = N(4)-methylcytidine(1402) in 16S rRNA + S-adenosyl-L-homocysteine + H(+). Functionally, specifically methylates the N4 position of cytidine in position 1402 (C1402) of 16S rRNA. The sequence is that of Ribosomal RNA small subunit methyltransferase H from Ureaplasma urealyticum serovar 10 (strain ATCC 33699 / Western).